A 118-amino-acid chain; its full sequence is Group 1 truncated hemoglobin GlbN (118 aa).

H70 is a binding site for heme.

The protein belongs to the truncated hemoglobin family. Group I subfamily. In terms of assembly, monomer. Heme serves as cofactor.

The protein localises to the membrane. The sequence is that of Group 1 truncated hemoglobin GlbN (glbN) from Nostoc sp. (strain MUN 8820).